Consider the following 105-residue polypeptide: Integration host factor subunit alpha (105 aa).

Belongs to the bacterial histone-like protein family. In terms of assembly, heterodimer of an alpha and a beta chain.

Functionally, this protein is one of the two subunits of integration host factor, a specific DNA-binding protein that functions in genetic recombination as well as in transcriptional and translational control. This is Integration host factor subunit alpha from Xanthobacter autotrophicus (strain ATCC BAA-1158 / Py2).